The chain runs to 440 residues: 23S rRNA (uracil(1939)-C(5))-methyltransferase RlmD (440 aa).

A TRAM domain is found at 10-68 (KSTQPQRIEFTVDSLDHHCVGIGRHQGKAIFIEGALPGELVKARILEDKKQYAHAALQQ). Residues Cys81, Cys87, Cys90, and Cys169 each contribute to the [4Fe-4S] cluster site. S-adenosyl-L-methionine-binding residues include Gln273, Phe302, Asn307, Glu323, Asp350, and Asp371. The active-site Nucleophile is Cys397.

This sequence belongs to the class I-like SAM-binding methyltransferase superfamily. RNA M5U methyltransferase family. RlmD subfamily.

It catalyses the reaction uridine(1939) in 23S rRNA + S-adenosyl-L-methionine = 5-methyluridine(1939) in 23S rRNA + S-adenosyl-L-homocysteine + H(+). In terms of biological role, catalyzes the formation of 5-methyl-uridine at position 1939 (m5U1939) in 23S rRNA. In Aeromonas hydrophila subsp. hydrophila (strain ATCC 7966 / DSM 30187 / BCRC 13018 / CCUG 14551 / JCM 1027 / KCTC 2358 / NCIMB 9240 / NCTC 8049), this protein is 23S rRNA (uracil(1939)-C(5))-methyltransferase RlmD.